A 245-amino-acid chain; its full sequence is 1-acyl-sn-glycerol-3-phosphate acyltransferase (245 aa).

At methionine 1 the chain carries N-formylmethionine. The short motif at 73–78 (HQNNYD) is the HXXXXD motif element.

The protein belongs to the 1-acyl-sn-glycerol-3-phosphate acyltransferase family.

The protein localises to the cell inner membrane. The enzyme catalyses a 1-acyl-sn-glycero-3-phosphate + an acyl-CoA = a 1,2-diacyl-sn-glycero-3-phosphate + CoA. It catalyses the reaction a fatty acyl-[ACP] + a 1-acyl-sn-glycero-3-phosphate = a 1,2-diacyl-sn-glycero-3-phosphate + holo-[ACP]. Its pathway is phospholipid metabolism; CDP-diacylglycerol biosynthesis; CDP-diacylglycerol from sn-glycerol 3-phosphate: step 2/3. Converts lysophosphatidic acid (LPA) into phosphatidic acid by incorporating an acyl moiety at the 2 position. This enzyme can utilize either acyl-CoA or acyl-ACP as the fatty acyl donor. The chain is 1-acyl-sn-glycerol-3-phosphate acyltransferase (plsC) from Escherichia coli (strain K12).